The sequence spans 484 residues: Adenylosuccinate lyase (484 aa).

Ala-2 is modified (N-acetylalanine). Residues 20–21 (RY), 85–87 (RHD), and 111–112 (TS) each bind substrate. An N6-acetyllysine modification is found at Lys-147. His-159 (proton donor/acceptor) is an active-site residue. Substrate is bound at residue Gln-241. The active-site Proton donor/acceptor is the Ser-289. The residue at position 295 (Lys-295) is an N6-acetyllysine. Substrate contacts are provided by Arg-303, Arg-329, Ser-334, and Arg-338. Lys-415 participates in a covalent cross-link: Glycyl lysine isopeptide (Lys-Gly) (interchain with G-Cter in SUMO1).

This sequence belongs to the lyase 1 family. Adenylosuccinate lyase subfamily. As to quaternary structure, homotetramer. Residues from neighboring subunits contribute catalytic and substrate-binding residues to each active site. As to expression, ubiquitously expressed. Both isoforms are produced by all tissues. Isoform 2 is 10-fold less abundant than isoform 1.

The catalysed reaction is N(6)-(1,2-dicarboxyethyl)-AMP = fumarate + AMP. The enzyme catalyses (2S)-2-[5-amino-1-(5-phospho-beta-D-ribosyl)imidazole-4-carboxamido]succinate = 5-amino-1-(5-phospho-beta-D-ribosyl)imidazole-4-carboxamide + fumarate. It functions in the pathway purine metabolism; AMP biosynthesis via de novo pathway; AMP from IMP: step 2/2. It participates in purine metabolism; IMP biosynthesis via de novo pathway; 5-amino-1-(5-phospho-D-ribosyl)imidazole-4-carboxamide from 5-amino-1-(5-phospho-D-ribosyl)imidazole-4-carboxylate: step 2/2. The enzyme reaction kinetics indicate cooperativity between subunits. Catalyzes two non-sequential steps in de novo AMP synthesis: converts (S)-2-(5-amino-1-(5-phospho-D-ribosyl)imidazole-4-carboxamido)succinate (SAICAR) to fumarate plus 5-amino-1-(5-phospho-D-ribosyl)imidazole-4-carboxamide, and thereby also contributes to de novo IMP synthesis, and converts succinyladenosine monophosphate (SAMP) to AMP and fumarate. This chain is Adenylosuccinate lyase (ADSL), found in Homo sapiens (Human).